We begin with the raw amino-acid sequence, 311 residues long: Acetaldehyde dehydrogenase (311 aa).

The active-site Acyl-thioester intermediate is the Cys-131. NAD(+)-binding positions include 162-170 (SVGPGTRKN) and Asn-273.

Belongs to the acetaldehyde dehydrogenase family.

It carries out the reaction acetaldehyde + NAD(+) + CoA = acetyl-CoA + NADH + H(+). This chain is Acetaldehyde dehydrogenase, found in Ralstonia pickettii (strain 12J).